We begin with the raw amino-acid sequence, 764 residues long: A-type ATP synthase subunit A (764 aa).

This sequence belongs to the ATPase alpha/beta chains family. Has multiple subunits with at least A(3), B(3), C, D, E, F, H, I and proteolipid K(x). In terms of processing, this protein undergoes a protein self splicing that involves a post-translational excision of the VDE intervening region (intein) followed by peptide ligation.

It is found in the cell membrane. It carries out the reaction ATP + H2O + 4 H(+)(in) = ADP + phosphate + 5 H(+)(out). Component of the A-type ATP synthase that produces ATP from ADP in the presence of a proton gradient across the membrane. The A chain is the catalytic subunit. This is A-type ATP synthase subunit A from Thermoplasma acidophilum (strain ATCC 25905 / DSM 1728 / JCM 9062 / NBRC 15155 / AMRC-C165).